The chain runs to 417 residues: MTYQPKSDFMRVMMERGFLADCTDYQGLDEAMSKGVVPTYIGYDATAASLHVGHLLNIMMLRWLQKTGHKPITLMGGGTTKVGDPSFRSDERPLLGAEQIDANIAGMKQVFSSYLTYGDGPTDALMLNNAEWLDGLNYLEFLRDVGRHFSVNRMLSFESVKSRLDREQSLSFLEFNYMILQAYDFMELNRRYGCRLQMGGSDQWGNIVNGIDLTRRILDQEVYGLTSPLLTTSDGRKMGKSQGGAIWLNGDMLSPYEFWQFWRNTTDADVGRFLKLYTELPLEECDRLGALAGSEINDAKIILANAVTALLHGPEAAQAAEATAREVFEKGGAGEDLPTLTLTTDEIGDGISVVQLITRSGLAKSGKEAKRLIAENGAKLDDAPLTDAGLMIDADRLAAPIKLSAGRKRHALIKRAD.

Y40 is a binding site for L-tyrosine. The 'HIGH' region motif lies at 45 to 54 (ATAASLHVGH). Positions 177 and 181 each coordinate L-tyrosine. The 'KMSKS' region signature appears at 237-241 (KMGKS). K240 contributes to the ATP binding site. One can recognise an S4 RNA-binding domain in the interval 351–414 (ISVVQLITRS…AGRKRHALIK (64 aa)).

Belongs to the class-I aminoacyl-tRNA synthetase family. TyrS type 1 subfamily. As to quaternary structure, homodimer.

The protein resides in the cytoplasm. The catalysed reaction is tRNA(Tyr) + L-tyrosine + ATP = L-tyrosyl-tRNA(Tyr) + AMP + diphosphate + H(+). In terms of biological role, catalyzes the attachment of tyrosine to tRNA(Tyr) in a two-step reaction: tyrosine is first activated by ATP to form Tyr-AMP and then transferred to the acceptor end of tRNA(Tyr). The sequence is that of Tyrosine--tRNA ligase from Dinoroseobacter shibae (strain DSM 16493 / NCIMB 14021 / DFL 12).